The following is a 359-amino-acid chain: 3-dehydroquinate synthase (359 aa).

NAD(+) contacts are provided by residues 69–74 (DGEKYK), 103–107 (GVVGD), 127–128 (TT), Lys-140, Lys-149, and 167–170 (TLDT). Zn(2+) contacts are provided by Glu-182, His-245, and His-262.

This sequence belongs to the sugar phosphate cyclases superfamily. Dehydroquinate synthase family. Requires Co(2+) as cofactor. Zn(2+) serves as cofactor. It depends on NAD(+) as a cofactor.

It is found in the cytoplasm. The enzyme catalyses 7-phospho-2-dehydro-3-deoxy-D-arabino-heptonate = 3-dehydroquinate + phosphate. It participates in metabolic intermediate biosynthesis; chorismate biosynthesis; chorismate from D-erythrose 4-phosphate and phosphoenolpyruvate: step 2/7. Catalyzes the conversion of 3-deoxy-D-arabino-heptulosonate 7-phosphate (DAHP) to dehydroquinate (DHQ). This Ruthia magnifica subsp. Calyptogena magnifica protein is 3-dehydroquinate synthase.